The primary structure comprises 359 residues: Oplophorus-luciferin 2-monooxygenase non-catalytic subunit (359 aa).

Residues 1–39 (MAVNFKFSLLTITIVVNILVYCNASAIKFDVDLEKVPSN) form the signal peptide. 8 LRR repeats span residues 135 to 158 (AATL…EMSQ), 160 to 180 (TKLN…ALSS), 181 to 203 (DTLA…AFQT), 228 to 251 (SPKL…AIKL), 255 to 278 (GPTT…AVEG), 280 to 300 (QGIL…VWRP), 302 to 325 (LENL…MWLI), and 331 to 356 (LAKI…VFHA).

As to quaternary structure, heterotetramer of a catalytic 19 kDa and a non-catalytic 35 kDa subunit.

Its subcellular location is the secreted. In terms of biological role, non-catalytic subunit of oplophorus-luciferin 2-monooxygenase. May stabilize the active conformation of the catalytic subunit. In Oplophorus gracilirostris (Luminous shrimp), this protein is Oplophorus-luciferin 2-monooxygenase non-catalytic subunit.